The following is a 375-amino-acid chain: DNA replication and repair protein RecF (375 aa).

Residue 30–37 (GENAQGKT) coordinates ATP.

It belongs to the RecF family.

It is found in the cytoplasm. In terms of biological role, the RecF protein is involved in DNA metabolism; it is required for DNA replication and normal SOS inducibility. RecF binds preferentially to single-stranded, linear DNA. It also seems to bind ATP. The polypeptide is DNA replication and repair protein RecF (Bacillus thuringiensis (strain Al Hakam)).